The following is a 450-amino-acid chain: Phosphoglucosamine mutase (450 aa).

The active-site Phosphoserine intermediate is S101. Mg(2+) is bound by residues S101, D240, D242, and D244. A Phosphoserine modification is found at S101.

This sequence belongs to the phosphohexose mutase family. Mg(2+) is required as a cofactor. In terms of processing, activated by phosphorylation. Phosphorylated by StkP in vivo.

It catalyses the reaction alpha-D-glucosamine 1-phosphate = D-glucosamine 6-phosphate. Catalyzes the conversion of glucosamine-6-phosphate to glucosamine-1-phosphate. The chain is Phosphoglucosamine mutase from Streptococcus pneumoniae (strain ATCC BAA-255 / R6).